The following is a 316-amino-acid chain: Olfactory receptor 1165 (316 aa).

Residues 1–28 are Extracellular-facing; the sequence is MMLDLGNESSVTMFILSGFSEYPHLHAP. Asn7 carries N-linked (GlcNAc...) asparagine glycosylation. Residues 29–50 traverse the membrane as a helical segment; it reads LFLLFFMIYTVTLIGNLGIIVV. Topologically, residues 51–61 are cytoplasmic; the sequence is RKVNPKLHTPM. A helical membrane pass occupies residues 62–80; the sequence is YFFLSHLSFLDICYSSVFT. The Extracellular portion of the chain corresponds to 81–99; it reads PKLLEILIVEDRTISFKGC. A disulfide bond links Cys99 and Cys181. Residues 100 to 122 form a helical membrane-spanning segment; it reads MTQFFLICAFVITEMFMLAVMAY. Over 123 to 141 the chain is Cytoplasmic; that stretch reads DRFVAVCNPLLYTVSMSPK. Residues 142-166 traverse the membrane as a helical segment; it reads LCAFLVAGTYMWGVLCSLTITYSLL. Over 167-205 the chain is Extracellular; the sequence is QLSYCGPNIINHFGCEYSAILSLSCSDPTFSQVVCLTIS. The chain crosses the membrane as a helical span at residues 206-228; the sequence is IFNETCSLLIILASYVFIVVTII. The Cytoplasmic portion of the chain corresponds to 229 to 239; the sequence is KMPSKGGLQKA. Residues 240–263 form a helical membrane-spanning segment; it reads FSTCSSHLTAISIFHGIILLLYCV. The Extracellular portion of the chain corresponds to 264–268; the sequence is PNSKN. The chain crosses the membrane as a helical span at residues 269–291; it reads SWLVVKVATVLFTVMIPMLNPLI. Topologically, residues 292–316 are cytoplasmic; sequence YSLRNKDVKGTVSRLMHLKLQAHST.

The protein belongs to the G-protein coupled receptor 1 family.

Its subcellular location is the cell membrane. Functionally, olfactory receptor. This Mus musculus (Mouse) protein is Olfactory receptor 1165.